Reading from the N-terminus, the 143-residue chain is Large ribosomal subunit protein uL13 (143 aa).

This sequence belongs to the universal ribosomal protein uL13 family. In terms of assembly, part of the 50S ribosomal subunit.

In terms of biological role, this protein is one of the early assembly proteins of the 50S ribosomal subunit, although it is not seen to bind rRNA by itself. It is important during the early stages of 50S assembly. This Clostridioides difficile (strain 630) (Peptoclostridium difficile) protein is Large ribosomal subunit protein uL13.